The chain runs to 340 residues: GTP 3',8-cyclase (340 aa).

Residues 20–246 (RFQRQYTYLR…PKAVNDGPAK (227 aa)) enclose the Radical SAM core domain. Arginine 29 is a binding site for GTP. Residues cysteine 36 and cysteine 40 each coordinate [4Fe-4S] cluster. Residue tyrosine 42 participates in S-adenosyl-L-methionine binding. A [4Fe-4S] cluster-binding site is contributed by cysteine 43. Arginine 79 lines the GTP pocket. Glycine 83 is an S-adenosyl-L-methionine binding site. GTP is bound at residue threonine 110. Position 134 (serine 134) interacts with S-adenosyl-L-methionine. Residue lysine 171 coordinates GTP. Methionine 205 serves as a coordination point for S-adenosyl-L-methionine. Positions 268 and 271 each coordinate [4Fe-4S] cluster. 273–275 (RLR) contacts GTP. Residue cysteine 285 coordinates [4Fe-4S] cluster.

It belongs to the radical SAM superfamily. MoaA family. Monomer and homodimer. [4Fe-4S] cluster serves as cofactor.

It catalyses the reaction GTP + AH2 + S-adenosyl-L-methionine = (8S)-3',8-cyclo-7,8-dihydroguanosine 5'-triphosphate + 5'-deoxyadenosine + L-methionine + A + H(+). Its pathway is cofactor biosynthesis; molybdopterin biosynthesis. Catalyzes the cyclization of GTP to (8S)-3',8-cyclo-7,8-dihydroguanosine 5'-triphosphate. This is GTP 3',8-cyclase from Haemophilus ducreyi (strain 35000HP / ATCC 700724).